The chain runs to 339 residues: Ureidoglycine carbamoyltransferase (339 aa).

Belongs to the aspartate/ornithine carbamoyltransferase superfamily. In terms of assembly, homodimer.

It carries out the reaction (S)-2-ureidoglycine + carbamoyl phosphate = allantoate + phosphate + H(+). Its pathway is purine metabolism. Its function is as follows. Catalyzes the phosphorolysis of allantoate to ureidoglycine and carbamoyl phosphate. Is likely involved in a purine degradation pathway. The sequence is that of Ureidoglycine carbamoyltransferase from Rubrobacter xylanophilus (strain DSM 9941 / JCM 11954 / NBRC 16129 / PRD-1).